A 276-amino-acid polypeptide reads, in one-letter code: Type III pantothenate kinase (276 aa).

18–25 (EIGNSRLH) is an ATP binding site. Residues tyrosine 116 and 120 to 123 (GIDR) contribute to the substrate site. Residue aspartate 122 is the Proton acceptor of the active site. Residue aspartate 142 participates in K(+) binding. An ATP-binding site is contributed by threonine 145. A substrate-binding site is contributed by threonine 200.

The protein belongs to the type III pantothenate kinase family. In terms of assembly, homodimer. Requires NH4(+) as cofactor. K(+) serves as cofactor.

It is found in the cytoplasm. The catalysed reaction is (R)-pantothenate + ATP = (R)-4'-phosphopantothenate + ADP + H(+). Its pathway is cofactor biosynthesis; coenzyme A biosynthesis; CoA from (R)-pantothenate: step 1/5. Its function is as follows. Catalyzes the phosphorylation of pantothenate (Pan), the first step in CoA biosynthesis. The protein is Type III pantothenate kinase of Nostoc sp. (strain PCC 7120 / SAG 25.82 / UTEX 2576).